We begin with the raw amino-acid sequence, 152 residues long: MIGIFHIFMWYFLLVLYMGQIKGAFGTYEPVTYKTGCTLWGIFFIIAGVFLIRVTKYPTRSGIISTLIINIICIITTITAVTLTIIELSHFNSVSYRNYGQAKLGREVSRILLFFYGLEFSIALTHSIYSCSNLFRRQNDLTSVTEEAESTP.

4 helical membrane-spanning segments follow: residues 1–21 (MIGIFHIFMWYFLLVLYMGQI), 32–52 (TYKTGCTLWGIFFIIAGVFLI), 66–86 (TLIINIICIITTITAVTLTII), and 111–131 (ILLFFYGLEFSIALTHSIYSC).

The protein belongs to the MS4A family.

Its subcellular location is the membrane. Functionally, may be involved in signal transduction as a component of a multimeric receptor complex. In Homo sapiens (Human), this protein is Membrane-spanning 4-domains subfamily A member 13 (MS4A13).